We begin with the raw amino-acid sequence, 212 residues long: Nuclear phosphoprotein UL3 homolog (212 aa).

Belongs to the alphaherpesvirinae HHV-1 UL3 family. Post-translationally, phosphorylated.

It is found in the host nucleus. In Equus caballus (Horse), this protein is Nuclear phosphoprotein UL3 homolog.